Consider the following 2261-residue polypeptide: Phospholipid-transporting ATPase ABCA1 (2261 aa).

Residue C3 is the site of S-palmitoyl cysteine attachment. Residue N14 is glycosylated (N-linked (GlcNAc...) asparagine). A helical transmembrane segment spans residues 22–42 (TCQLLLEVAWPLFIFLILISV). C23 carries the S-palmitoyl cysteine lipid modification. At 43–639 (RLSYPPYEQH…DIFLRVMSRS (597 aa)) the chain is on the extracellular side. The interval 69-80 (WVQGIICNANNP) is annulus domain 1. A disulfide bridge connects residues C75 and C309. N-linked (GlcNAc...) asparagine glycosylation is found at N98, N151, N161, N196, N244, N292, N337, and N349. The annulus domain 2 stretch occupies residues 368–379 (SRIIWKALKPLL). N-linked (GlcNAc...) asparagine glycans are attached at residues N400, N478, N489, and N521. The gateway domain stretch occupies residues 564–594 (ERTNKIKDGYWDPGPRADPFEDMRYVWGGFA). 5 helical membrane-spanning segments follow: residues 640–660 (MPLF…KGIV), 683–703 (FSWF…LVVI), 716–736 (SVVF…CFLI), 745–765 (LAAA…VLCV), and 777–797 (IFAS…FALF). An N-linked (GlcNAc...) asparagine glycan is attached at N820. A helical membrane pass occupies residues 827–847 (MMLFDTFLYGVMTWYIEAVFP). In terms of domain architecture, ABC transporter 1 spans 899–1131 (VSIQNLVKVY…LGTGYYLTLV (233 aa)). 933-940 (GHNGAGKT) is an ATP binding site. Residues 1041 to 1057 (LSVALAFVGGSKVVILD) traverse the membrane as a helical segment. S1042 carries the phosphoserine; by PKA modification. Residues C1110 and C1111 are each lipidated (S-palmitoyl cysteine). Residues N1144 and N1294 are each glycosylated (N-linked (GlcNAc...) asparagine). Residues 1283 to 1312 (RPFTEDDAADPNDSDIDPESRETDLLSGMD) are disordered. Over residues 1287 to 1299 (EDDAADPNDSDID) the composition is skewed to acidic residues. S1296 carries the post-translational modification Phosphoserine. A helical membrane pass occupies residues 1351–1371 (IVLPAVFVCIALVFSLIVPPF). The Extracellular segment spans residues 1372–1656 (GKYPSLELQP…ALMTTSVDVL (285 aa)). A glycan (N-linked (GlcNAc...) asparagine) is linked at N1453. The cysteines at positions 1463 and 1477 are disulfide-linked. 2 N-linked (GlcNAc...) asparagine glycosylation sites follow: N1504 and N1637. Helical transmembrane passes span 1657 to 1677 (VSIC…VFLI), 1703 to 1723 (FVWD…IFIC), 1735 to 1755 (LPVL…LMYP), 1768 to 1788 (VVLT…TFVL), 1802 to 1822 (ILKS…LIDM), and 1852 to 1872 (NLFA…LIQY). One can recognise an ABC transporter 2 domain in the interval 1912-2144 (LEIKELTKIY…FGDGYTIVVR (233 aa)). 1946 to 1953 (GVNGAGKS) lines the ATP pocket. Residue N2044 is glycosylated (N-linked (GlcNAc...) asparagine). The residue at position 2054 (S2054) is a Phosphoserine; by PKA. N2238 carries an N-linked (GlcNAc...) asparagine glycan.

It belongs to the ABC transporter superfamily. ABCA family. Interacts with MEGF10. May interact with APOE1; functionally associated with APOE1 in the biogenesis of HDLs. Interacts with ABCA8; this interaction potentiates cholesterol efflux. Interacts with ABCA12 and NR1H2; this interaction is required for ABCA1 localization to the cell surface and is necessary for its normal activity and stability. Post-translationally, phosphorylation on Ser-2054 regulates phospholipid efflux. In terms of processing, palmitoylated by ZDHHC8. Palmitoylation is essential for localization to the plasma membrane. In terms of tissue distribution, widely expressed, but most abundant in macrophages.

It is found in the cell membrane. It localises to the endosome. The catalysed reaction is ATP + H2O + phospholipidSide 1 = ADP + phosphate + phospholipidSide 2.. It carries out the reaction a 1,2-diacyl-sn-glycero-3-phosphocholine(out) + ATP + H2O = a 1,2-diacyl-sn-glycero-3-phosphocholine(in) + ADP + phosphate + H(+). It catalyses the reaction a 1,2-diacyl-sn-glycero-3-phospho-L-serine(out) + ATP + H2O = a 1,2-diacyl-sn-glycero-3-phospho-L-serine(in) + ADP + phosphate + H(+). The enzyme catalyses a sphingomyelin(in) + ATP + H2O = a sphingomyelin(out) + ADP + phosphate + H(+). The catalysed reaction is cholesterol(in) + ATP + H2O = cholesterol(out) + ADP + phosphate + H(+). With respect to regulation, ATPase activity is decreased by cholesterol and ceramide. ATPase activity is stimulated by phosphatidylcholine and to a lesser degree by phosphatidylserine and sphingomyelin. Phospholipid translocase activity is highly reduced by berylium fluoride and aluminum flouride and reduced by N-ethylmaleimide. In terms of biological role, catalyzes the translocation of specific phospholipids from the cytoplasmic to the extracellular/lumenal leaflet of membrane coupled to the hydrolysis of ATP. Thereby, participates in phospholipid transfer to apolipoproteins to form nascent high density lipoproteins/HDLs. Transports preferentially phosphatidylcholine over phosphatidylserine. May play a similar role in the efflux of intracellular cholesterol to apolipoproteins and the formation of nascent high density lipoproteins/HDLs. Translocates phospholipids from the outer face of the plasma membrane and forces it through its gateway and annulus into an elongated hydrophobic tunnel in its extracellular domain. The protein is Phospholipid-transporting ATPase ABCA1 of Homo sapiens (Human).